The chain runs to 397 residues: Nuclear pore complex-interacting protein family member B2 (397 aa).

Positions 256–397 are disordered; sequence NRMGHQPPPP…KLRTGHCTQA (142 aa). The span at 267–277 shows a compositional bias: polar residues; it reads QQHSITDNSLS. The span at 278-287 shows a compositional bias: low complexity; that stretch reads LKTPPECLLT. The segment covering 382-391 has biased composition (basic residues); that stretch reads KRRRLSKLRT.

It belongs to the NPIP family.

It is found in the nucleus. In Homo sapiens (Human), this protein is Nuclear pore complex-interacting protein family member B2.